Consider the following 298-residue polypeptide: Protoheme IX farnesyltransferase (298 aa).

9 helical membrane-spanning segments follow: residues V19–N39, P40–L60, L91–W111, F112–L132, I140–G160, L167–F187, I213–G233, L236–L256, and L277–G297.

It belongs to the UbiA prenyltransferase family. Protoheme IX farnesyltransferase subfamily. In terms of assembly, interacts with CtaA.

Its subcellular location is the cell inner membrane. The enzyme catalyses heme b + (2E,6E)-farnesyl diphosphate + H2O = Fe(II)-heme o + diphosphate. It participates in porphyrin-containing compound metabolism; heme O biosynthesis; heme O from protoheme: step 1/1. Its function is as follows. Converts heme B (protoheme IX) to heme O by substitution of the vinyl group on carbon 2 of heme B porphyrin ring with a hydroxyethyl farnesyl side group. This chain is Protoheme IX farnesyltransferase, found in Paracoccus denitrificans.